We begin with the raw amino-acid sequence, 370 residues long: 4-hydroxy-3-methylbut-2-en-1-yl diphosphate synthase (flavodoxin) (370 aa).

Residues Cys270, Cys273, Cys305, and Glu312 each coordinate [4Fe-4S] cluster.

This sequence belongs to the IspG family. It depends on [4Fe-4S] cluster as a cofactor.

It catalyses the reaction (2E)-4-hydroxy-3-methylbut-2-enyl diphosphate + oxidized [flavodoxin] + H2O + 2 H(+) = 2-C-methyl-D-erythritol 2,4-cyclic diphosphate + reduced [flavodoxin]. The protein operates within isoprenoid biosynthesis; isopentenyl diphosphate biosynthesis via DXP pathway; isopentenyl diphosphate from 1-deoxy-D-xylulose 5-phosphate: step 5/6. In terms of biological role, converts 2C-methyl-D-erythritol 2,4-cyclodiphosphate (ME-2,4cPP) into 1-hydroxy-2-methyl-2-(E)-butenyl 4-diphosphate. This Marinomonas sp. (strain MWYL1) protein is 4-hydroxy-3-methylbut-2-en-1-yl diphosphate synthase (flavodoxin).